The primary structure comprises 405 residues: Glucose-1-phosphate adenylyltransferase (405 aa).

Residues glycine 164, 179 to 180 (EK), and serine 197 each bind alpha-D-glucose 1-phosphate.

The protein belongs to the bacterial/plant glucose-1-phosphate adenylyltransferase family. As to quaternary structure, homotetramer.

It catalyses the reaction alpha-D-glucose 1-phosphate + ATP + H(+) = ADP-alpha-D-glucose + diphosphate. It functions in the pathway glycan biosynthesis; glycogen biosynthesis. In terms of biological role, involved in the biosynthesis of ADP-glucose, a building block required for the elongation reactions to produce glycogen. Catalyzes the reaction between ATP and alpha-D-glucose 1-phosphate (G1P) to produce pyrophosphate and ADP-Glc. In Corynebacterium jeikeium (strain K411), this protein is Glucose-1-phosphate adenylyltransferase.